Consider the following 154-residue polypeptide: MVKAVVVLKGESYVHGTVCFTQESENAPVCITGEIKDMDADAKRGMHVHEFGDNTNGCTSAGPHYNPFKKHHGAPTDSERHVGDLGNIQTNSCGAAQLDFSDKIISLYGPHSIIGRSLVVHASTDDLGKGGNEESLKTGNAGARLACGVIGIST.

Cu cation-binding residues include His-47, His-49, and His-64. An intrachain disulfide couples Cys-58 to Cys-147. Zn(2+) contacts are provided by His-64, His-72, His-81, and Asp-84. Position 121 (His-121) interacts with Cu cation. Substrate is bound at residue Arg-144.

This sequence belongs to the Cu-Zn superoxide dismutase family. Homodimer. Cu cation serves as cofactor. Requires Zn(2+) as cofactor.

The protein localises to the cytoplasm. Its subcellular location is the mitochondrion. The protein resides in the cell membrane. The enzyme catalyses 2 superoxide + 2 H(+) = H2O2 + O2. Functionally, destroys radicals which are normally produced within the cells and which are toxic to biological systems. Destroys radicals produced by host defense mechanisms. In Cryptococcus neoformans var. grubii serotype A (strain H99 / ATCC 208821 / CBS 10515 / FGSC 9487) (Filobasidiella neoformans var. grubii), this protein is Superoxide dismutase [Cu-Zn].